The chain runs to 753 residues: 5-methyltetrahydropteroyltriglutamate--homocysteine methyltransferase (753 aa).

Residues 17–20 and Lys-117 contribute to the 5-methyltetrahydropteroyltri-L-glutamate site; that span reads RELK. Residues 431–433 and Glu-484 each bind L-homocysteine; that span reads IGS. L-methionine-binding positions include 431 to 433 and Glu-484; that span reads IGS. 5-methyltetrahydropteroyltri-L-glutamate-binding positions include 515–516 and Trp-561; that span reads RC. Residue Asp-599 participates in L-homocysteine binding. Asp-599 contacts L-methionine. Glu-605 contributes to the 5-methyltetrahydropteroyltri-L-glutamate binding site. Zn(2+) contacts are provided by His-641, Cys-643, and Glu-665. Residue His-694 is the Proton donor of the active site. Cys-726 lines the Zn(2+) pocket.

It belongs to the vitamin-B12 independent methionine synthase family. Requires Zn(2+) as cofactor.

The enzyme catalyses 5-methyltetrahydropteroyltri-L-glutamate + L-homocysteine = tetrahydropteroyltri-L-glutamate + L-methionine. It functions in the pathway amino-acid biosynthesis; L-methionine biosynthesis via de novo pathway; L-methionine from L-homocysteine (MetE route): step 1/1. Its function is as follows. Catalyzes the transfer of a methyl group from 5-methyltetrahydrofolate to homocysteine resulting in methionine formation. This Enterobacter sp. (strain 638) protein is 5-methyltetrahydropteroyltriglutamate--homocysteine methyltransferase.